The primary structure comprises 451 residues: Golgi reassembly-stacking protein 2 (451 aa).

A lipid anchor (N-myristoyl glycine) is attached at G2. PDZ GRASP-type domains follow at residues 15–105 (EGYH…FCSF) and 111–199 (NVWH…YGYL). The interval 15–215 (EGYHVLRVQE…PFEEGKKISL (201 aa)) is GRASP. Dimethylated arginine occurs at positions 30 and 47. An important for membrane binding region spans residues 194–199 (IGYGYL). S214 is modified (phosphoserine). T222 bears the Phosphothreonine mark. T225 is modified (phosphothreonine; by MAPK). Residues 236-252 (LSSVSPPSLSPPGTTGV) are compositionally biased toward low complexity. 2 disordered regions span residues 236–255 (LSSVSPPSLSPPGTTGVEQS) and 377–451 (EGSS…SEPS). The segment covering 410–424 (SSLTVDVTSPASKVP) has biased composition (polar residues). S411 is subject to Phosphoserine. T417 and T435 each carry phosphothreonine. S443 and S448 each carry phosphoserine.

It belongs to the GORASP family. Homodimer. Homooligomer. ER stress induces phosphorylation-dependent monomerization. Interacts with BLZF1/Golgin 45. Identified in a complex with RAB2 and GORASP2. Interacts with JAM2 and JAM3. Interacts with members of the p24 cargo receptors. Interacts with CNIH and the cytoplasmic domain of transmembrane TGFA, prior its transit in the trans-Golgi. Interacts with KCTD5. Interacts with TMED2 and TMED3. Interacts with SEC16A in response to ER stress. Interacts (via PDZ GRASP-type 1 domain) with core-glycosylated CFTR in response to ER stress. Post-translationally, myristoylated. Myristoylation is essential for the Golgi targeting. Palmitoylated. In terms of processing, phosphorylated in mitotic cells. ER stress-induced phosphorylation at Ser-443 induces monomerization and subsequent relocalization from Golgi to ER which is essential for mediating unconventional (ER/Golgi-independent) trafficking of CFTR to the cell membrane. As to expression, detected in lung, heart and testis. Colocalized in a polarized fashion in the acrosome region with JAM3 in round spermatids (at protein level).

The protein resides in the golgi apparatus membrane. Its subcellular location is the endoplasmic reticulum membrane. The protein localises to the golgi apparatus. Its function is as follows. Key structural protein of the Golgi apparatus. The membrane cisternae of the Golgi apparatus adhere to each other to form stacks, which are aligned side by side to form the Golgi ribbon. Acting in concert with GORASP1/GRASP65, is required for the formation and maintenance of the Golgi ribbon, and may be dispensable for the formation of stacks. However, other studies suggest that GORASP2 plays a role in assembly and membrane stacking of the Golgi cisternae, and in the process by which Golgi stacks reform after breakdown during mitosis and meiosis. May regulate the intracellular transport and presentation of a defined set of transmembrane proteins, such as transmembrane TGFA. Required for normal acrosome formation during spermiogenesis and normal male fertility, probably by promoting colocalization of JAM2 and JAM3 at contact sites between germ cells and Sertoli cells. Mediates ER stress-induced unconventional (ER/Golgi-independent) trafficking of core-glycosylated CFTR to cell membrane. The protein is Golgi reassembly-stacking protein 2 (Gorasp2) of Mus musculus (Mouse).